We begin with the raw amino-acid sequence, 259 residues long: Global transcriptional regulator CodY (259 aa).

The segment at 1–155 is GAF domain; that stretch reads MNLLAKTRKL…GATVVGMEIL (155 aa). Positions 203–222 form a DNA-binding region, H-T-H motif; it reads ASKIADRVGITRSVIVNALR.

It belongs to the CodY family.

Its subcellular location is the cytoplasm. In terms of biological role, DNA-binding global transcriptional regulator which is involved in the adaptive response to starvation and acts by directly or indirectly controlling the expression of numerous genes in response to nutrient availability. During rapid exponential growth, CodY is highly active and represses genes whose products allow adaptation to nutrient depletion. This is Global transcriptional regulator CodY from Exiguobacterium sibiricum (strain DSM 17290 / CCUG 55495 / CIP 109462 / JCM 13490 / 255-15).